The primary structure comprises 214 residues: Alpha-S1-casein (214 aa).

The first 15 residues, 1 to 15 (MKLLILTCLVAVALA), serve as a signal peptide directing secretion. At Ser-27 the chain carries Phosphoserine; in allele A. Position 56 is a phosphoserine; in allele C (Ser-56). Phosphoserine occurs at positions 61 and 63. The interval 69-91 (MEDAKQMKAGSSSSSEEIVPNSA) is disordered. A Phosphoserine; in alleles A and C modification is found at Ser-79. Phosphoserine is present on Ser-80. Residue Ser-81 is modified to Phosphoserine; in alleles A and C. The residue at position 82 (Ser-82) is a Phosphoserine. Ser-83 carries the post-translational modification Phosphoserine; in alleles A and C. Ser-90 carries the post-translational modification Phosphoserine. Residues 105–111 (RYLGYLE) are opioid-like peptide sequence. Phosphoserine is present on Ser-130.

This sequence belongs to the alpha-casein family. In terms of tissue distribution, mammary gland specific. Secreted in milk.

It is found in the secreted. Important role in the capacity of milk to transport calcium phosphate. The protein is Alpha-S1-casein (CSN1S1) of Ovis aries (Sheep).